Reading from the N-terminus, the 873-residue chain is Alanine--tRNA ligase (873 aa).

Zn(2+) contacts are provided by H562, H566, C663, and H667.

Belongs to the class-II aminoacyl-tRNA synthetase family. Zn(2+) serves as cofactor.

It is found in the cytoplasm. The enzyme catalyses tRNA(Ala) + L-alanine + ATP = L-alanyl-tRNA(Ala) + AMP + diphosphate. In terms of biological role, catalyzes the attachment of alanine to tRNA(Ala) in a two-step reaction: alanine is first activated by ATP to form Ala-AMP and then transferred to the acceptor end of tRNA(Ala). Also edits incorrectly charged Ser-tRNA(Ala) and Gly-tRNA(Ala) via its editing domain. The chain is Alanine--tRNA ligase from Bordetella petrii (strain ATCC BAA-461 / DSM 12804 / CCUG 43448).